We begin with the raw amino-acid sequence, 935 residues long: Isoleucine--tRNA ligase (935 aa).

The short motif at 58–68 (PYANGSIHVGH) is the 'HIGH' region element. Position 558 (Glu558) interacts with L-isoleucyl-5'-AMP. Positions 599 to 603 (KMSKS) match the 'KMSKS' region motif. Residue Lys602 coordinates ATP. The Zn(2+) site is built by Cys897, Cys900, Cys917, and Cys920.

This sequence belongs to the class-I aminoacyl-tRNA synthetase family. IleS type 1 subfamily. As to quaternary structure, monomer. The cofactor is Zn(2+).

Its subcellular location is the cytoplasm. It carries out the reaction tRNA(Ile) + L-isoleucine + ATP = L-isoleucyl-tRNA(Ile) + AMP + diphosphate. Its function is as follows. Catalyzes the attachment of isoleucine to tRNA(Ile). As IleRS can inadvertently accommodate and process structurally similar amino acids such as valine, to avoid such errors it has two additional distinct tRNA(Ile)-dependent editing activities. One activity is designated as 'pretransfer' editing and involves the hydrolysis of activated Val-AMP. The other activity is designated 'posttransfer' editing and involves deacylation of mischarged Val-tRNA(Ile). This chain is Isoleucine--tRNA ligase, found in Francisella tularensis subsp. tularensis (strain SCHU S4 / Schu 4).